Consider the following 156-residue polypeptide: CD-NTase/cGAS isopeptidase (156 aa).

The region spanning 9–147 (IDDFDNHVVI…WIGKKIKNDI (139 aa)) is the MPN domain. Glutamate 38 (proton donor/acceptor) is an active-site residue. Residues histidine 100, histidine 102, and aspartate 113 each contribute to the Zn(2+) site. The JAMM motif motif lies at 100–113 (HTHPEDFPHPSFID).

This sequence belongs to the peptidase M67B family. Cap3 isopeptidase subfamily.

In terms of biological role, metalloprotease priming reversal component of a CBASS antivirus system. CBASS (cyclic oligonucleotide-based antiphage signaling system) provides immunity against bacteriophages. The CD-NTase protein (DncV) synthesizes cyclic nucleotides in response to infection; these serve as specific second messenger signals. The signals activate a diverse range of effectors, leading to bacterial cell death and thus abortive phage infection. A type II-A(GA) CBASS system. Its function is as follows. Reverses the primed state of DncV, the CD-NTase, cleaving it from cellular proteins. Cleaves a Sumo-DncV-DncV fusion protein precisely between the 2 DncV moieties. Protects E.coli against phage infection. When capV and dncV are introduced in E.coli MG1655 there is 1000-fold protection against phage P1; protection against other phage (T4, T5 and T6) requires the 2 subsequent genes. In another paper the capV-dncV-cap2-cap3 operon gives 10(4)-10(5)-fold protection against phages lambda, T2, T4 and T6, about 1000-fold protection against P1 and 10-fold protection against T5. This chain is CD-NTase/cGAS isopeptidase, found in Escherichia coli (strain TW11681).